We begin with the raw amino-acid sequence, 119 residues long: Holo-[acyl-carrier-protein] synthase (119 aa).

Positions 7 and 56 each coordinate Mg(2+).

Belongs to the P-Pant transferase superfamily. AcpS family. Mg(2+) serves as cofactor.

It localises to the cytoplasm. The catalysed reaction is apo-[ACP] + CoA = holo-[ACP] + adenosine 3',5'-bisphosphate + H(+). In terms of biological role, transfers the 4'-phosphopantetheine moiety from coenzyme A to a Ser of acyl-carrier-protein. This chain is Holo-[acyl-carrier-protein] synthase, found in Chlamydia trachomatis serovar L2 (strain ATCC VR-902B / DSM 19102 / 434/Bu).